A 302-amino-acid chain; its full sequence is Meiotically up-regulated gene 129 protein (302 aa).

Functionally, has a role in meiosis. This Schizosaccharomyces pombe (strain 972 / ATCC 24843) (Fission yeast) protein is Meiotically up-regulated gene 129 protein (mug129).